Consider the following 387-residue polypeptide: Eukaryotic translation initiation factor 3 subunit M (387 aa).

The PCI domain occupies 181–340 (LSSKVMIELL…QKVHISSTMH (160 aa)).

The protein belongs to the eIF-3 subunit M family. Component of the eukaryotic translation initiation factor 3 (eIF-3) complex. The eIF-3 complex interacts with pix.

It localises to the cytoplasm. The protein resides in the golgi apparatus. Component of the eukaryotic translation initiation factor 3 (eIF-3) complex, which is involved in protein synthesis of a specialized repertoire of mRNAs and, together with other initiation factors, stimulates binding of mRNA and methionyl-tRNAi to the 40S ribosome. The eIF-3 complex specifically targets and initiates translation of a subset of mRNAs involved in cell proliferation. In Drosophila sechellia (Fruit fly), this protein is Eukaryotic translation initiation factor 3 subunit M.